The primary structure comprises 219 residues: Glutathione S-transferase U19 (219 aa).

The GST N-terminal domain occupies 3-82 (NEVILLDFWP…YIDEVWSHKN (80 aa)). Glutathione is bound by residues 13–14 (SM), 39–40 (NK), 53–54 (KI), and 66–67 (ES). In terms of domain architecture, GST C-terminal spans 88 to 208 (DPYLRAQARF…LPDPEKVTEF (121 aa)). Ser198 is subject to Phosphoserine.

The protein belongs to the GST superfamily. Tau family.

It localises to the cytoplasm. The protein localises to the cytosol. It catalyses the reaction RX + glutathione = an S-substituted glutathione + a halide anion + H(+). Functionally, catalyzes the glutathionylation of 12-oxophytodienoate (OPDA). In vitro, possesses glutathione S-transferase activity toward 1-chloro-2,4-dinitrobenzene (CDNB) and benzyl isothiocyanate (BITC), and glutathione peroxidase activity toward cumene hydroperoxide. In Arabidopsis thaliana (Mouse-ear cress), this protein is Glutathione S-transferase U19 (GSTU19).